The chain runs to 222 residues: Charged multivesicular body protein 4a (222 aa).

2 disordered regions span residues 1 to 21 (MSGL…TPEE) and 177 to 222 (LLHV…EWVS). Positions 1–116 (MSGLGRLFGR…ELAAQGLKKA (116 aa)) are interaction with phosphoinosides. Residues 1 to 150 (MSGLGRLFGR…QISDAISRPV (150 aa)) form an intramolecular interaction with C-terminus region. Coiled-coil stretches lie at residues 20–105 (EEAI…VLRT) and 155–180 (DVDE…LLHV). The interval 151–222 (GFGDDVDEDE…ELKQLAEWVS (72 aa)) is intramolecular interaction with N-terminus. Phosphoserine is present on Ser-196.

This sequence belongs to the SNF7 family. In terms of assembly, probable core component of the endosomal sorting required for transport complex III (ESCRT-III). ESCRT-III components are thought to multimerize to form a flat lattice on the perimeter membrane of the endosome. Several assembly forms of ESCRT-III may exist that interact and act sequentially. Self-associates; overexpression leads to the assembly of filaments that curve and associate to create circular rings. Interacts with CHMP2A. Interacts with CHMP3; the interaction requires the release of CHMP4A autoinhibition. Interacts with CHMP4B. Interacts with CHMP4C. Interacts with CHMP6. Interacts with VPS4A. Interacts with PDCD6IP; the interaction is direct.

The protein resides in the cytoplasmic vesicle membrane. It is found in the late endosome membrane. In terms of biological role, probable core component of the endosomal sorting required for transport complex III (ESCRT-III) which is involved in multivesicular bodies (MVBs) formation and sorting of endosomal cargo proteins into MVBs. MVBs contain intraluminal vesicles (ILVs) that are generated by invagination and scission from the limiting membrane of the endosome and mostly are delivered to lysosomes enabling degradation of membrane proteins, such as stimulated growth factor receptors, lysosomal enzymes and lipids. The MVB pathway appears to require the sequential function of ESCRT-O, -I,-II and -III complexes. ESCRT-III proteins mostly dissociate from the invaginating membrane before the ILV is released. The ESCRT machinery also functions in topologically equivalent membrane fission events, such as the terminal stages of cytokinesis and the budding of enveloped viruses (lentiviruses). ESCRT-III proteins are believed to mediate the necessary vesicle extrusion and/or membrane fission activities, possibly in conjunction with the AAA ATPase VPS4. When overexpressed, membrane-assembled circular arrays of CHMP4A filaments can promote or stabilize negative curvature and outward budding. CHMP4A/B/C are required for the exosomal release of SDCBP, CD63 and syndecan. The polypeptide is Charged multivesicular body protein 4a (CHMP4A) (Bos taurus (Bovine)).